Reading from the N-terminus, the 253-residue chain is MDNRFATAFVIACVLSLISTIYMAASIGTDFWYEYRSPIQENSSDSNKIAWEDFLGDEADEKTYNDVLFRYNGSLGLWRRCITIPKNTHWYAPPERTESFDVVTKCMSFTLNEQFMEKYVDPGNHNSGIDLLRTYLWRCQFLLPFVSLGLMCFGALIGLCACICRSLYPTLATGILHLLAGLCTLGSVSCYVAGIELLHQKVELPKDVSGEFGWSFCLACVSAPLQFMAAALFIWAAHTNRKEYTLMKAYRVA.

A helical transmembrane segment spans residues 5-25 (FATAFVIACVLSLISTIYMAA). Residues Asn42 and Asn72 are each glycosylated (N-linked (GlcNAc...) asparagine). 3 consecutive transmembrane segments (helical) span residues 141 to 161 (FLLP…GLCA), 175 to 195 (ILHL…VAGI), and 216 to 236 (FCLA…FIWA).

The protein belongs to the PMP-22/EMP/MP20 family. In terms of tissue distribution, in the brain, highly expressed in endothelial cells of the cerebellum compared to other regions (at protein level).

Its subcellular location is the cell junction. It localises to the tight junction. The protein localises to the cell membrane. Plays a role in negatively regulating the permeability of cells to small molecules. The polypeptide is Claudin domain-containing protein 1 (Cldnd1) (Mus musculus (Mouse)).